Consider the following 164-residue polypeptide: MTKKDKKAKGPKMSTITTKSGESLKVFEDLHDFETYLKGETEDQEFDHVHCQLKYYPPFVLHDAHDDPEKIKETANSHSKKFVRHLHQHVEKHLLKDIKTAINKPELKFHDKKKQESFDRIVWNYGEETELNAKKFKVSVEVVCKHDGAMVDVDYKTEPLQPLI.

Belongs to the RGI1 family.

It localises to the cytoplasm. Functionally, involved in the control of energetic metabolism and significantly contribute to cell fitness, especially under respiratory growth conditions. The chain is Respiratory growth induced protein 2 (RGI2) from Saccharomyces cerevisiae (strain JAY291) (Baker's yeast).